Reading from the N-terminus, the 195-residue chain is GRF1-interacting factor 2 (195 aa).

The tract at residues Gln-166–Lys-195 is disordered. Gly residues predominate over residues Gly-171–Gly-180. A compositionally biased stretch (basic and acidic residues) spans Gly-181 to Lys-195.

This sequence belongs to the SS18 family. In terms of assembly, interacts with GRF1. As to expression, predominantly expressed in shoot tips containing the shoot apical meristem (SAM) and flower buds. Also expressed in mature flowers.

In terms of biological role, transcription coactivator that plays a role in the regulation of cell expansion in leaf and cotyledons tissues. Component of a network formed by miR396, the GRFs and their interacting factors (GIFs) acting in the regulation of meristem function, at least partially through the control of cell proliferation. GIFs are involved in the positive regulation of cell proliferation of lateral organs in a functionally redundant manner. This is GRF1-interacting factor 2 (GIF2) from Arabidopsis thaliana (Mouse-ear cress).